Here is a 225-residue protein sequence, read N- to C-terminus: Small ribosomal subunit protein uS3 (225 aa).

A KH type-2 domain is found at 38–106; sequence LRAFLRRKLS…DVALNIVEIR (69 aa).

This sequence belongs to the universal ribosomal protein uS3 family. In terms of assembly, part of the 30S ribosomal subunit. Forms a tight complex with proteins S10 and S14.

Binds the lower part of the 30S subunit head. Binds mRNA in the 70S ribosome, positioning it for translation. The polypeptide is Small ribosomal subunit protein uS3 (Gluconobacter oxydans (strain 621H) (Gluconobacter suboxydans)).